Reading from the N-terminus, the 152-residue chain is Deoxyuridine 5'-triphosphate nucleotidohydrolase (152 aa).

Residues 71-73 (RSG), Asn-84, and 88-90 (TVD) each bind substrate.

The protein belongs to the dUTPase family. It depends on Mg(2+) as a cofactor.

It carries out the reaction dUTP + H2O = dUMP + diphosphate + H(+). Its pathway is pyrimidine metabolism; dUMP biosynthesis; dUMP from dCTP (dUTP route): step 2/2. This enzyme is involved in nucleotide metabolism: it produces dUMP, the immediate precursor of thymidine nucleotides and it decreases the intracellular concentration of dUTP so that uracil cannot be incorporated into DNA. This Maricaulis maris (strain MCS10) (Caulobacter maris) protein is Deoxyuridine 5'-triphosphate nucleotidohydrolase.